The chain runs to 122 residues: Holo-[acyl-carrier-protein] synthase (122 aa).

The Mg(2+) site is built by aspartate 8 and glutamate 56.

Belongs to the P-Pant transferase superfamily. AcpS family. It depends on Mg(2+) as a cofactor.

The protein resides in the cytoplasm. It carries out the reaction apo-[ACP] + CoA = holo-[ACP] + adenosine 3',5'-bisphosphate + H(+). Transfers the 4'-phosphopantetheine moiety from coenzyme A to a Ser of acyl-carrier-protein. The protein is Holo-[acyl-carrier-protein] synthase of Alkaliphilus metalliredigens (strain QYMF).